Here is a 64-residue protein sequence, read N- to C-terminus: Large ribosomal subunit protein bL35 (64 aa).

It belongs to the bacterial ribosomal protein bL35 family.

This Chlorobium limicola (strain DSM 245 / NBRC 103803 / 6330) protein is Large ribosomal subunit protein bL35.